The sequence spans 75 residues: Exodeoxyribonuclease 7 small subunit (75 aa).

This sequence belongs to the XseB family. Heterooligomer composed of large and small subunits.

It is found in the cytoplasm. It carries out the reaction Exonucleolytic cleavage in either 5'- to 3'- or 3'- to 5'-direction to yield nucleoside 5'-phosphates.. In terms of biological role, bidirectionally degrades single-stranded DNA into large acid-insoluble oligonucleotides, which are then degraded further into small acid-soluble oligonucleotides. This chain is Exodeoxyribonuclease 7 small subunit, found in Nostoc punctiforme (strain ATCC 29133 / PCC 73102).